The following is a 311-amino-acid chain: MRRAALWLWLCALALRLQPALLHSVAVNMPPEDQDGSGDDSDNFSGSGAGALPDITSSHTPSTWKDLGPVTTTATAPEPTSPDAIAASTTILPTGEQPEGGRAVLLAEVEPGLTAQKEATHPPSETTLHPTTHSVSTARATMAPGPATSHPHRDVQPDHHETSAPTGRGRMEPHRPHVEEGGPPATEKAAEEDPSTQIPVGEGSGEQDFTFDLSGENAAGAAGEPGSRNGAPEDPEATGATGASQGLLDRKEVLGGVIAGGLVGLIFAVCLVGFMLYRMKKKDEGSYSLEEPKQANGGAYQKPTKQEEFYA.

A signal peptide spans 1–22 (MRRAALWLWLCALALRLQPALL). Topologically, residues 23-255 (HSVAVNMPPE…GLLDRKEVLG (233 aa)) are extracellular. Disordered stretches follow at residues 31 to 85 (PEDQ…PDAI) and 141 to 244 (TMAP…TGAS). Residues 32-42 (EDQDGSGDDSD) are compositionally biased toward acidic residues. Ser-37 carries O-linked (Xyl...) (chondroitin sulfate) serine glycosylation. N-linked (GlcNAc...) asparagine glycosylation occurs at Asn-43. O-linked (Xyl...) (heparan sulfate) serine glycans are attached at residues Ser-45 and Ser-47. Low complexity predominate over residues 71–84 (TTTATAPEPTSPDA). Basic and acidic residues-rich tracts occupy residues 151-162 (PHRDVQPDHHET) and 169-180 (GRMEPHRPHVEE). 2 O-linked (Xyl...) (chondroitin sulfate) serine glycosylation sites follow: Ser-204 and Ser-214. Positions 215–226 (GENAAGAAGEPG) are enriched in low complexity. Residues 256 to 276 (GVIAGGLVGLIFAVCLVGFML) traverse the membrane as a helical segment. The Cytoplasmic segment spans residues 277–311 (YRMKKKDEGSYSLEEPKQANGGAYQKPTKQEEFYA). Residues 285-311 (GSYSLEEPKQANGGAYQKPTKQEEFYA) form a disordered region. Ser-286 is subject to Phosphoserine.

It belongs to the syndecan proteoglycan family. Interacts with CDCP1. Interacts (via C-terminus) with TIAM1 (via PDZ domain). Interacts with MDK. In terms of processing, shedding is enhanced by a number of factors such as heparanase, thrombin or EGF. Also by stress and wound healing. PMA-mediated shedding is inhibited by TIMP3.

The protein localises to the membrane. It is found in the secreted. It localises to the extracellular exosome. Its function is as follows. Cell surface proteoglycan that contains both heparan sulfate and chondroitin sulfate and that links the cytoskeleton to the interstitial matrix. Regulates exosome biogenesis in concert with SDCBP and PDCD6IP. Able to induce its own expression in dental mesenchymal cells and also in the neighboring dental epithelial cells via an MSX1-mediated pathway. The polypeptide is Syndecan-1 (Bos taurus (Bovine)).